The chain runs to 504 residues: Histidine ammonia-lyase (504 aa).

A cross-link (5-imidazolinone (Ala-Gly)) is located at residues 142-144 (ASG). Serine 143 carries the post-translational modification 2,3-didehydroalanine (Ser).

Belongs to the PAL/histidase family. Contains an active site 4-methylidene-imidazol-5-one (MIO), which is formed autocatalytically by cyclization and dehydration of residues Ala-Ser-Gly.

The protein localises to the cytoplasm. It carries out the reaction L-histidine = trans-urocanate + NH4(+). It functions in the pathway amino-acid degradation; L-histidine degradation into L-glutamate; N-formimidoyl-L-glutamate from L-histidine: step 1/3. The polypeptide is Histidine ammonia-lyase (Staphylococcus aureus (strain MRSA252)).